The primary structure comprises 750 residues: Photosystem I P700 chlorophyll a apoprotein A1 (750 aa).

8 consecutive transmembrane segments (helical) span residues 70 to 93, 156 to 179, 195 to 219, 291 to 309, 346 to 369, 385 to 411, 433 to 455, and 531 to 549; these read VFSA…FHGA, LYCT…FHYH, LNHH…HVSL, IAHH…GHMY, WHAQ…HHMY, LSLF…IFMV, AIIS…LYIH, and FLVH…LILL. C573 and C582 together coordinate [4Fe-4S] cluster. Transmembrane regions (helical) follow at residues 589–610 and 664–686; these read HVFL…HFSW and LSAY…MFLF. A chlorophyll a'-binding site is contributed by H675. Chlorophyll a-binding residues include M683 and Y691. W692 provides a ligand contact to phylloquinone. The chain crosses the membrane as a helical span at residues 724-744; that stretch reads AVGVTHYLLGGIATTWAFFLA.

The protein belongs to the PsaA/PsaB family. In terms of assembly, the PsaA/B heterodimer binds the P700 chlorophyll special pair and subsequent electron acceptors. PSI consists of a core antenna complex that captures photons, and an electron transfer chain that converts photonic excitation into a charge separation. The eukaryotic PSI reaction center is composed of at least 11 subunits. Requires P700 is a chlorophyll a/chlorophyll a' dimer, A0 is one or more chlorophyll a, A1 is one or both phylloquinones and FX is a shared 4Fe-4S iron-sulfur center. as cofactor.

The protein resides in the plastid. It is found in the chloroplast thylakoid membrane. It catalyses the reaction reduced [plastocyanin] + hnu + oxidized [2Fe-2S]-[ferredoxin] = oxidized [plastocyanin] + reduced [2Fe-2S]-[ferredoxin]. In terms of biological role, psaA and PsaB bind P700, the primary electron donor of photosystem I (PSI), as well as the electron acceptors A0, A1 and FX. PSI is a plastocyanin-ferredoxin oxidoreductase, converting photonic excitation into a charge separation, which transfers an electron from the donor P700 chlorophyll pair to the spectroscopically characterized acceptors A0, A1, FX, FA and FB in turn. Oxidized P700 is reduced on the lumenal side of the thylakoid membrane by plastocyanin. In Morus indica (Mulberry), this protein is Photosystem I P700 chlorophyll a apoprotein A1.